A 350-amino-acid chain; its full sequence is UDP-3-O-acylglucosamine N-acyltransferase (350 aa).

H257 acts as the Proton acceptor in catalysis.

Belongs to the transferase hexapeptide repeat family. LpxD subfamily. Homotrimer.

The enzyme catalyses a UDP-3-O-[(3R)-3-hydroxyacyl]-alpha-D-glucosamine + a (3R)-hydroxyacyl-[ACP] = a UDP-2-N,3-O-bis[(3R)-3-hydroxyacyl]-alpha-D-glucosamine + holo-[ACP] + H(+). The protein operates within bacterial outer membrane biogenesis; LPS lipid A biosynthesis. Catalyzes the N-acylation of UDP-3-O-acylglucosamine using 3-hydroxyacyl-ACP as the acyl donor. Is involved in the biosynthesis of lipid A, a phosphorylated glycolipid that anchors the lipopolysaccharide to the outer membrane of the cell. The chain is UDP-3-O-acylglucosamine N-acyltransferase from Chelativorans sp. (strain BNC1).